A 552-amino-acid polypeptide reads, in one-letter code: MSETETRPTNFIRQIIDEDLKSGKHSSVHTRFPPEPNGYLHIGHAKSICLNFGIAQDYQGQCNLRFDDTNPEKEDIEYVESIKNDVNWLGFQWSGDIQYSSNYFDKLYGYAVELIEKGLAYVDELTPEQMREYRGSLKEPGKNSPYRDRSVEENLALFEQMRDGKFKEGTICLRAKIDMASSFIVLRDPVIYRVRFATHHQTGDKWCIYPMYDFTHCISDALEGITHSICTLEFQDNRRLYDWVLENITIDCQPRQYEFSRLNLEYTVMSKRKLNQLVTEKLVNGWDDPRMPTVSGLRRRGFTSASIREFCKRIGVTKQENMIEFSSLESCIRDDLNESAPRAMAVLEPVKLVIENYEEGKVETLNIANHPNKPEMGTREVPFTREVYIEQDDFREEANKKYKRLVLGKEVRLRGAYVIQANRIEKDEAGNITTIFCSYDEDTLGKNPADGRKVKGVIHWVSADKALPAEIRLYDRLFTVPNPGAADDFAATINPESLVVKNGFVEPSLATAEAEVGYQFERTGYFCADNKDSSADALVFNRTVGLRDTWAG.

The 'HIGH' region signature appears at 34–44 (PEPNGYLHIGH). ATP is bound by residues 35–37 (EPN) and 41–47 (HIGHAKS). Asp-67 and Tyr-212 together coordinate L-glutamine. ATP-binding positions include Thr-231, 261-262 (RL), and 269-271 (MSK). The short motif at 268–272 (VMSKR) is the 'KMSKS' region element.

It belongs to the class-I aminoacyl-tRNA synthetase family. As to quaternary structure, monomer.

Its subcellular location is the cytoplasm. The enzyme catalyses tRNA(Gln) + L-glutamine + ATP = L-glutaminyl-tRNA(Gln) + AMP + diphosphate. The chain is Glutamine--tRNA ligase from Aliivibrio fischeri (strain MJ11) (Vibrio fischeri).